The chain runs to 398 residues: Acetate kinase (398 aa).

Position 7 (asparagine 7) interacts with Mg(2+). Lysine 14 contributes to the ATP binding site. Arginine 91 is a binding site for substrate. Catalysis depends on aspartate 148, which acts as the Proton donor/acceptor. ATP-binding positions include 208–212 (HLGNG), 283–285 (DFR), and 331–335 (GIGEH). A Mg(2+)-binding site is contributed by glutamate 386.

Belongs to the acetokinase family. In terms of assembly, homodimer. Requires Mg(2+) as cofactor. It depends on Mn(2+) as a cofactor.

It is found in the cytoplasm. It carries out the reaction acetate + ATP = acetyl phosphate + ADP. The protein operates within metabolic intermediate biosynthesis; acetyl-CoA biosynthesis; acetyl-CoA from acetate: step 1/2. Functionally, catalyzes the formation of acetyl phosphate from acetate and ATP. Can also catalyze the reverse reaction. This is Acetate kinase from Clostridium botulinum (strain Alaska E43 / Type E3).